A 632-amino-acid polypeptide reads, in one-letter code: Nucleoside triphosphatase I (632 aa).

The Helicase ATP-binding domain occupies 42-204 (FLGLDKMHSL…IMLVNLLRPK (163 aa)). 55–62 (HETGVGKT) provides a ligand contact to ATP. Residues 141–144 (DECH) carry the DEXH box motif. A Helicase C-terminal domain is found at 367 to 532 (KFTDVCLRIL…EFTQLFKVFK (166 aa)). Residues 457 to 524 (DIFILDMTWN…DIIRNKSKEF (68 aa)) form a binding to the cap-specific mRNA (nucleoside-2'-O-)-methyltransferase region.

The protein belongs to the helicase family. NPH I subfamily. Monomer. Interacts (via C-terminus) with RAP94 (via N-terminus). Interacts with the cap-specific mRNA (nucleoside-2'-O-)-methyltransferase.

Its subcellular location is the virion. It catalyses the reaction a ribonucleoside 5'-triphosphate + H2O = a ribonucleoside 5'-diphosphate + phosphate + H(+). DNA-dependent ATPase required for providing the needed energy to achieve the termination of early transcripts. Acts in concert with the RAP94 subunit of the virion RNA polymerase and the capping enzyme/VTF to catalyze release of UUUUUNU-containing nascent RNA from the elongation complex. NPH-I must bind ssDNA in order to exhibit ATPase activity. This chain is Nucleoside triphosphatase I (NPH1), found in Rabbit fibroma virus (strain Kasza) (RFV).